Reading from the N-terminus, the 219-residue chain is ATP phosphoribosyltransferase (219 aa).

This sequence belongs to the ATP phosphoribosyltransferase family. Short subfamily. In terms of assembly, heteromultimer composed of HisG and HisZ subunits.

The protein resides in the cytoplasm. The enzyme catalyses 1-(5-phospho-beta-D-ribosyl)-ATP + diphosphate = 5-phospho-alpha-D-ribose 1-diphosphate + ATP. It functions in the pathway amino-acid biosynthesis; L-histidine biosynthesis; L-histidine from 5-phospho-alpha-D-ribose 1-diphosphate: step 1/9. Functionally, catalyzes the condensation of ATP and 5-phosphoribose 1-diphosphate to form N'-(5'-phosphoribosyl)-ATP (PR-ATP). Has a crucial role in the pathway because the rate of histidine biosynthesis seems to be controlled primarily by regulation of HisG enzymatic activity. This Paramagnetospirillum magneticum (strain ATCC 700264 / AMB-1) (Magnetospirillum magneticum) protein is ATP phosphoribosyltransferase.